The chain runs to 310 residues: Glutaminase 1 (310 aa).

Positions 66, 117, 161, 168, 192, 244, and 262 each coordinate substrate. Residue lysine 294 is modified to N6-acetyllysine.

Belongs to the glutaminase family. As to quaternary structure, homotetramer.

The catalysed reaction is L-glutamine + H2O = L-glutamate + NH4(+). The polypeptide is Glutaminase 1 (Escherichia coli O6:H1 (strain CFT073 / ATCC 700928 / UPEC)).